Reading from the N-terminus, the 102-residue chain is MKFLIAFVAIAFFACVSAGGYGNIGLGGYGLGNVGYLQNHGGGYGRRPILISKSSNPSAAAAAAAASSGVNSGLYNQRGVIGYELDGGILGGHGGYGGGLGY.

A signal peptide spans 1–18 (MKFLIAFVAIAFFACVSA).

It belongs to the chorion protein S15/S18 family.

It localises to the secreted. Chorion membrane (egg shell) protein; plays a role in protecting the egg from the environment. This chain is Chorion protein S15 (Cp15), found in Drosophila grimshawi (Hawaiian fruit fly).